The sequence spans 598 residues: Phospholipase B-like protein G (598 aa).

The first 24 residues, 1–24 (MIKSYYLFFIILIFLIFINNFILC), serve as a signal peptide directing secretion. 9 N-linked (GlcNAc...) asparagine glycosylation sites follow: N50, N98, N173, N341, N368, N450, N480, N526, and N576.

It belongs to the phospholipase B-like family.

Its subcellular location is the secreted. In terms of biological role, probable phospholipase. The chain is Phospholipase B-like protein G (plbG) from Dictyostelium discoideum (Social amoeba).